We begin with the raw amino-acid sequence, 485 residues long: NADH-quinone oxidoreductase subunit N (485 aa).

14 consecutive transmembrane segments (helical) span residues L8 to I28, F35 to V55, G71 to A91, F105 to L125, A127 to F147, Y159 to A179, L203 to F223, P235 to M255, V271 to Q291, L297 to Q317, V326 to L346, A373 to I393, W408 to V430, and I455 to I475.

The protein belongs to the complex I subunit 2 family. NDH-1 is composed of 13 different subunits. Subunits NuoA, H, J, K, L, M, N constitute the membrane sector of the complex.

The protein localises to the cell inner membrane. The catalysed reaction is a quinone + NADH + 5 H(+)(in) = a quinol + NAD(+) + 4 H(+)(out). Its function is as follows. NDH-1 shuttles electrons from NADH, via FMN and iron-sulfur (Fe-S) centers, to quinones in the respiratory chain. The immediate electron acceptor for the enzyme in this species is believed to be ubiquinone. Couples the redox reaction to proton translocation (for every two electrons transferred, four hydrogen ions are translocated across the cytoplasmic membrane), and thus conserves the redox energy in a proton gradient. The protein is NADH-quinone oxidoreductase subunit N of Salmonella gallinarum (strain 287/91 / NCTC 13346).